We begin with the raw amino-acid sequence, 389 residues long: Large envelope protein (389 aa).

At Met-1 the chain carries N-acetylmethionine. Gly-2 carries N-myristoyl glycine; by host lipidation. The pre-S1 stretch occupies residues 2–108; it reads GQNLSTSNPL…PPLRTTHPQA (107 aa). Residues 2–163 form a pre-S region; it reads GQNLSTSNPL…SSRIGDPALN (162 aa). Over 2–170 the chain is Virion surface; in external conformation; the sequence is GQNLSTSNPL…ALNMENITSG (169 aa). The Intravirion; in internal conformation portion of the chain corresponds to 2-242; it reads GQNLSTSNPL…VGYRWMCLRR (241 aa). Disordered regions lie at residues 76–102 and 133–154; these read TLPA…PPLR and GGSS…LSTS. Polar residues predominate over residues 85–95; that stretch reads STNRQSGRQPT. The tract at residues 109–163 is pre-S2; the sequence is MQWNSTTFHQTLQDPRVRGLYLPAGGSSSGTVNPVPTTASPTLSTSSRIGDPALN. Residues 142–154 show a composition bias toward low complexity; sequence PVPTTASPTLSTS. Residues 171–191 traverse the membrane as a helical segment; that stretch reads FLGPLLVLQAGFFLLTRILTI. Over 192-242 the chain is Intravirion; in external conformation; that stretch reads PQSLDSWWTSLSFLGGTTVCLGQNSQSPTSNHSPTSCPPTCVGYRWMCLRR. The chain crosses the membrane as a helical span at residues 243–263; that stretch reads FIIFLFILLLCLIFLLVLLDY. At 264–337 the chain is on the virion surface side; sequence QGMLPVCPLI…WASARFSWLS (74 aa). Asn-309 carries N-linked (GlcNAc...) asparagine; by host glycosylation. The helical transmembrane segment at 338 to 358 threads the bilayer; it reads LLVPFVQWFVGLSPTVWLSVI. Residues 359-364 lie on the Intravirion side of the membrane; the sequence is WMMWYW. A helical membrane pass occupies residues 365–387; it reads GPSLYNTLSPFLPLLPIFFYLWV. The Virion surface portion of the chain corresponds to 388-389; it reads YI.

Belongs to the orthohepadnavirus major surface antigen family. In its internal form (Li-HBsAg), interacts with the capsid protein and with the isoform S. Interacts with host chaperone CANX. In terms of assembly, associates with host chaperone CANX through its pre-S2 N glycan; this association may be essential for isoform M proper secretion. As to quaternary structure, interacts with isoform L. Interacts with the antigens of satellite virus HDV (HDVAgs); this interaction is required for encapsidation of HDV genomic RNA. Post-translationally, isoform M is N-terminally acetylated by host at a ratio of 90%, and N-glycosylated by host at the pre-S2 region. In terms of processing, myristoylated.

The protein localises to the virion membrane. In terms of biological role, the large envelope protein exists in two topological conformations, one which is termed 'external' or Le-HBsAg and the other 'internal' or Li-HBsAg. In its external conformation the protein attaches the virus to cell receptors and thereby initiating infection. This interaction determines the species specificity and liver tropism. This attachment induces virion internalization predominantly through caveolin-mediated endocytosis. The large envelope protein also assures fusion between virion membrane and endosomal membrane. In its internal conformation the protein plays a role in virion morphogenesis and mediates the contact with the nucleocapsid like a matrix protein. Functionally, the middle envelope protein plays an important role in the budding of the virion. It is involved in the induction of budding in a nucleocapsid independent way. In this process the majority of envelope proteins bud to form subviral lipoprotein particles of 22 nm of diameter that do not contain a nucleocapsid. The sequence is that of Large envelope protein from Homo sapiens (Human).